A 741-amino-acid chain; its full sequence is Nuclear pore complex protein Nup88 (741 aa).

Alanine 2 is subject to N-acetylalanine. Residues serine 35, serine 50, serine 379, serine 437, serine 442, and serine 517 each carry the phosphoserine modification. The residue at position 525 (threonine 525) is a Phosphothreonine. The residue at position 540 (serine 540) is a Phosphoserine. Positions 585-651 (EEIQRRVKLL…KLLHSFHSEL (67 aa)) form a coiled coil. A Phosphoserine modification is found at serine 698.

In terms of assembly, interacts with NUP214/CAN. Interacts with NUP62 and NUP98. Ubiquitous.

It is found in the nucleus. The protein localises to the nuclear pore complex. Functionally, component of nuclear pore complex. In Homo sapiens (Human), this protein is Nuclear pore complex protein Nup88 (NUP88).